The primary structure comprises 156 residues: Small ribosomal subunit protein uS7 (156 aa).

This sequence belongs to the universal ribosomal protein uS7 family. Part of the 30S ribosomal subunit. Contacts proteins S9 and S11.

In terms of biological role, one of the primary rRNA binding proteins, it binds directly to 16S rRNA where it nucleates assembly of the head domain of the 30S subunit. Is located at the subunit interface close to the decoding center, probably blocks exit of the E-site tRNA. The protein is Small ribosomal subunit protein uS7 of Chelativorans sp. (strain BNC1).